Reading from the N-terminus, the 340-residue chain is Phosphate acyltransferase (340 aa).

The tract at residues 285-340 is disordered; it reads WRQSGRPARHRGQEPRRHRQPRFWLCHRRGRRRSPRQRNRTHPGTGQPPAGCAGAR. Basic residues predominate over residues 300-325; sequence RRHRQPRFWLCHRRGRRRSPRQRNRT.

It belongs to the PlsX family. As to quaternary structure, homodimer. Probably interacts with PlsY.

It localises to the cytoplasm. It carries out the reaction a fatty acyl-[ACP] + phosphate = an acyl phosphate + holo-[ACP]. It participates in lipid metabolism; phospholipid metabolism. In terms of biological role, catalyzes the reversible formation of acyl-phosphate (acyl-PO(4)) from acyl-[acyl-carrier-protein] (acyl-ACP). This enzyme utilizes acyl-ACP as fatty acyl donor, but not acyl-CoA. This is Phosphate acyltransferase from Laribacter hongkongensis (strain HLHK9).